A 236-amino-acid chain; its full sequence is 2-C-methyl-D-erythritol 4-phosphate cytidylyltransferase (236 aa).

The protein belongs to the IspD/TarI cytidylyltransferase family. IspD subfamily.

It catalyses the reaction 2-C-methyl-D-erythritol 4-phosphate + CTP + H(+) = 4-CDP-2-C-methyl-D-erythritol + diphosphate. It participates in isoprenoid biosynthesis; isopentenyl diphosphate biosynthesis via DXP pathway; isopentenyl diphosphate from 1-deoxy-D-xylulose 5-phosphate: step 2/6. Catalyzes the formation of 4-diphosphocytidyl-2-C-methyl-D-erythritol from CTP and 2-C-methyl-D-erythritol 4-phosphate (MEP). This Symbiobacterium thermophilum (strain DSM 24528 / JCM 14929 / IAM 14863 / T) protein is 2-C-methyl-D-erythritol 4-phosphate cytidylyltransferase.